A 226-amino-acid chain; its full sequence is Ribonuclease 3 (226 aa).

The 123-residue stretch at 7–129 (LPRLCRTLGY…IIGAIYLDSD (123 aa)) folds into the RNase III domain. Mg(2+) is bound at residue Glu-42. Asp-46 is a catalytic residue. The Mg(2+) site is built by Asp-115 and Glu-118. The active site involves Glu-118. The 71-residue stretch at 156–226 (DAKTLLQEYL…AAQVLELLKK (71 aa)) folds into the DRBM domain.

It belongs to the ribonuclease III family. As to quaternary structure, homodimer. Mg(2+) is required as a cofactor.

The protein localises to the cytoplasm. It catalyses the reaction Endonucleolytic cleavage to 5'-phosphomonoester.. In terms of biological role, digests double-stranded RNA. Involved in the processing of primary rRNA transcript to yield the immediate precursors to the large and small rRNAs (23S and 16S). Processes some mRNAs, and tRNAs when they are encoded in the rRNA operon. Processes pre-crRNA and tracrRNA of type II CRISPR loci if present in the organism. The protein is Ribonuclease 3 of Shewanella sp. (strain MR-7).